The following is a 380-amino-acid chain: Glutamate 5-kinase (380 aa).

Residue K15 coordinates ATP. S59, D146, and N158 together coordinate substrate. 178–179 lines the ATP pocket; sequence TD. The PUA domain maps to 285-363; the sequence is RGSVTVDAGA…AEFERLLGYA (79 aa).

This sequence belongs to the glutamate 5-kinase family.

The protein localises to the cytoplasm. It carries out the reaction L-glutamate + ATP = L-glutamyl 5-phosphate + ADP. It functions in the pathway amino-acid biosynthesis; L-proline biosynthesis; L-glutamate 5-semialdehyde from L-glutamate: step 1/2. Functionally, catalyzes the transfer of a phosphate group to glutamate to form L-glutamate 5-phosphate. The protein is Glutamate 5-kinase of Acidovorax ebreus (strain TPSY) (Diaphorobacter sp. (strain TPSY)).